Consider the following 118-residue polypeptide: Putative pterin-4-alpha-carbinolamine dehydratase (118 aa).

The protein belongs to the pterin-4-alpha-carbinolamine dehydratase family.

It catalyses the reaction (4aS,6R)-4a-hydroxy-L-erythro-5,6,7,8-tetrahydrobiopterin = (6R)-L-erythro-6,7-dihydrobiopterin + H2O. This is Putative pterin-4-alpha-carbinolamine dehydratase from Pseudomonas paraeruginosa (strain DSM 24068 / PA7) (Pseudomonas aeruginosa (strain PA7)).